The sequence spans 242 residues: Tryptophan synthase alpha chain (242 aa).

Catalysis depends on proton acceptor residues Glu-31 and Asp-42.

It belongs to the TrpA family. As to quaternary structure, tetramer of two alpha and two beta chains.

It carries out the reaction (1S,2R)-1-C-(indol-3-yl)glycerol 3-phosphate + L-serine = D-glyceraldehyde 3-phosphate + L-tryptophan + H2O. The protein operates within amino-acid biosynthesis; L-tryptophan biosynthesis; L-tryptophan from chorismate: step 5/5. Its function is as follows. The alpha subunit is responsible for the aldol cleavage of indoleglycerol phosphate to indole and glyceraldehyde 3-phosphate. This is Tryptophan synthase alpha chain from Staphylococcus aureus (strain bovine RF122 / ET3-1).